A 642-amino-acid chain; its full sequence is Acid beta-fructofuranosidase (642 aa).

Over 1–22 (MRNDSPYTPLLNASHNNHRRRE) the chain is Cytoplasmic. Positions 1 to 95 (MRNDSPYTPL…LSGNLVGEGG (95 aa)) are cleaved as a propeptide — removed in mature form. A helical; Signal-anchor for type II membrane protein transmembrane segment spans residues 23–43 (LLLLFSGLLLLASIIAFSAYI). The Lumenal portion of the chain corresponds to 44 to 642 (AQPHADADVS…YHPDQKRQTS (599 aa)). Asparagine 100 is a glycosylation site (N-linked (GlcNAc...) asparagine). Substrate is bound by residues 119–122 (WMND), glutamine 138, tryptophan 146, 181–182 (WT), and 245–246 (RD). Residue aspartate 122 is part of the active site. Asparagine 267 carries an N-linked (GlcNAc...) asparagine glycan. Positions 300 and 333 each coordinate substrate. A disulfide bond links cysteine 490 and cysteine 538. N-linked (GlcNAc...) asparagine glycosylation is found at asparagine 491 and asparagine 615.

The protein belongs to the glycosyl hydrolase 32 family. In terms of assembly, may be present in two forms, a 70 kDa monomer and a heterodimer of the 30 kDa and 38 kDa subunits. The ratio of the levels of the two forms within cells appears to be regulated developmentally.

The protein localises to the membrane. It localises to the vacuole. Its subcellular location is the vacuole lumen. The enzyme catalyses Hydrolysis of terminal non-reducing beta-D-fructofuranoside residues in beta-D-fructofuranosides.. The protein operates within glycan biosynthesis; sucrose metabolism. In Vicia faba (Broad bean), this protein is Acid beta-fructofuranosidase (VCINV).